Here is a 1385-residue protein sequence, read N- to C-terminus: MWTARHAVALLVVLTYAYSSILPPGTTFVQSIRDIFRFQEQLKKENVEDTICSETPPESSIPNRDELLELIRKSKIEDHKFDEHVRKKRQLSRISYQEYLDNLGKADYDVRIEEGWTEILYPFGTWAMDKQLMGQAGRETQTNLGFDCPFFGFRFNYTMVYPMGMLSFGLPPFSAPPWTFPNPAWPKQRDHSFVAAFYADAMFQWIGNTKISNVFFRSVHRPRLDDDEVYERNSQTNYGAPNYQQAGAQSAANQQFSNPSQYSQNLNAYSQNQQYNTQLLQQQQQIYGKRKKRQMPGRVSQPGMVVDPWLLDNITRHIQDGYTGANGFRAEHAFIATWYRMAHGGAARALDVSQFEHVKDWQNTFQVVLASDEIRTFAIFNYARLNWTSSNEAGGLDGFGGKQAAMAGFNGGNGTGWYGLPYSGEGRLWKLGYFSNVLTPGRWIHRVDEVIIPAGCTNASNGGMMTAPPWGPMHGGMAINVSGPCLRPADSVKVNFENWQTSCTRLSRVRARCIMPMFHKIGLVPIRMSRDGGQSFPFFGKFYVVNSERAPASVSLKDSVDNKTNRWYEPYAQELALGWQAMNLTWNTGARVDISLFGYWEDADRSHFERIDYLARGISNTGSYSFRPQQLTKQFLLRDAWQKFHFGFVQVALADAEDGVMWSKPTPFPWYHLHEWERYYGRNWPIDMCIEWFEYDGKRNNFQIDLTTDFPCPCKLPQAMLDLGRFMPIMDCDKDGDTSCPFNKGAQHCIQSVQPTFSGSSQQCCYDYDGYLMFTDDWEPDGDYTTFFQPGTPARAHRYGAAPYRLPPFIPTLSNYQLDLNPYRTCCKYADHCEFYYWRRMTNGCQDYRAPAAGYIYGEPHVITYDGIRYTMPGKGYYVLTMSDSPYHKLMVQVRLEQPDDTLWHAHVNATVITGVAVQENDSSIVQVYARKPMRRWRYRTDVYVDGTRRFFDKPHWKHQQFKHLDIRNPLQNMNQSEIVIMLKSGVGIRIFEGFGMLDVMVTLPPSYNTTCRPGESLSSSLNAPRGQRRCYTTLGLLGTYNNDPADDLTTPSGTVTRVQNPTTTASTTQMIYEQFASFWKIDGTNDKIGGVLFQDKFKPIYNPLLFAESDYRPVYWPQTIDMNASRVFTMEQVVSTCQNNPECEYDFIMTGRKEVGLTTLRRQKEFFALQKTGSKQLISCGPLLKKEGVVKTPPAANYLDGDKVVFSCKPKYYIHGDIERVCRNGTWSPGWWAWCRDRNLEYALKWMTALLSIFGISLIFVIFFCILWNIRKKKQAAHAERLQLKEQSDRLNKLENERIFGTSPEKTPLIETDFRSNFNMNQPSRPIPSQPPSSQYSPPVFAAPPPPSQPTRLPTYTNAISQQQRQFEPPRPPRGNMRFETSAI.

Residues 1–19 (MWTARHAVALLVVLTYAYS) form the signal peptide. The N-linked (GlcNAc...) asparagine glycan is linked to Asn156. The disordered stretch occupies residues 234–262 (SQTNYGAPNYQQAGAQSAANQQFSNPSQY). Over residues 242–261 (NYQQAGAQSAANQQFSNPSQ) the composition is skewed to low complexity. An NIDO domain is found at 285-450 (QIYGKRKKRQ…GRWIHRVDEV (166 aa)). N-linked (GlcNAc...) asparagine glycans are attached at residues Asn313, Asn386, Asn413, Asn458, Asn480, Asn562, and Asn583. The 160-residue stretch at 681–840 (GRNWPIDMCI…DHCEFYYWRR (160 aa)) folds into the AMOP domain. The VWFD domain maps to 852–1088 (AAGYIYGEPH…FWKIDGTNDK (237 aa)). Asn909, Asn921, Asn975, Asn1009, and Asn1124 each carry an N-linked (GlcNAc...) asparagine glycan. The Sushi domain maps to 1179 to 1238 (ISCGPLLKKEGVVKTPPAANYLDGDKVVFSCKPKYYIHGDIERVCRNGTWSPGWWAWCRD). 2 disulfide bridges follow: Cys1181/Cys1223 and Cys1209/Cys1236. N-linked (GlcNAc...) asparagine glycosylation occurs at Asn1225. Residues 1251–1271 (LLSIFGISLIFVIFFCILWNI) traverse the membrane as a helical segment. Residues 1321–1385 (MNQPSRPIPS…GNMRFETSAI (65 aa)) are disordered.

In terms of tissue distribution, highly expressed in the intestinal epithelia.

The protein localises to the membrane. Its subcellular location is the cell junction. In terms of biological role, may negatively regulate activity of innexin gap junction protein inx-16, thereby mediating the rhythmic frequency of the defecation motor program. Required for the clustering of inx-16 to the cell-cell junction of the intestinal epithelia. Probably dispensable for intestinal integrity. May be a cytokine receptor. The chain is Defecation cycle abnormal dec-7 from Caenorhabditis elegans.